Consider the following 276-residue polypeptide: Diaminopimelate epimerase (276 aa).

Residues Asn13, Gln46, and Asn66 each coordinate substrate. Cys75 (proton donor) is an active-site residue. Substrate is bound by residues 76-77 (GN), Asn159, Asn192, and 210-211 (ER). Residue Cys219 is the Proton acceptor of the active site. 220 to 221 (GT) is a binding site for substrate.

It belongs to the diaminopimelate epimerase family. Homodimer.

It localises to the cytoplasm. It catalyses the reaction (2S,6S)-2,6-diaminopimelate = meso-2,6-diaminopimelate. Its pathway is amino-acid biosynthesis; L-lysine biosynthesis via DAP pathway; DL-2,6-diaminopimelate from LL-2,6-diaminopimelate: step 1/1. Functionally, catalyzes the stereoinversion of LL-2,6-diaminopimelate (L,L-DAP) to meso-diaminopimelate (meso-DAP), a precursor of L-lysine and an essential component of the bacterial peptidoglycan. This is Diaminopimelate epimerase from Cellvibrio japonicus (strain Ueda107) (Pseudomonas fluorescens subsp. cellulosa).